We begin with the raw amino-acid sequence, 128 residues long: Large ribosomal subunit protein bL20 (128 aa).

The protein belongs to the bacterial ribosomal protein bL20 family.

Its function is as follows. Binds directly to 23S ribosomal RNA and is necessary for the in vitro assembly process of the 50S ribosomal subunit. It is not involved in the protein synthesizing functions of that subunit. The protein is Large ribosomal subunit protein bL20 of Anaplasma phagocytophilum (strain HZ).